A 1099-amino-acid polypeptide reads, in one-letter code: Adenylate cyclase type 7 (1099 aa).

The Cytoplasmic portion of the chain corresponds to 1 to 33 (MPAKGRYFLNEGDEGPDQAALYEKYRLTSLHGP). 6 helical membrane passes run 34 to 54 (LLLLLLLVAAATCIALISIAF), 63 to 83 (QVVLGTAFLMLTLFVALYVLV), 95 to 117 (ALALLTWACLMVLGSVLMWDSLE), 122 to 142 (AWEQVPFFLFVVFVVYALLPL), 147 to 167 (AIVAGVTSTVSHLLVFGAVTR), and 178 to 198 (LGLQLLANAVILLGGNFTGAF). At 199–595 (HKHQLQDASR…YRLVPIPRAR (397 aa)) the chain is on the cytoplasmic side. Mg(2+) contacts are provided by aspartate 286, isoleucine 287, and aspartate 330. ATP contacts are provided by residues 286–291 (DIVGFT), 328–330 (LGD), and arginine 374. The tract at residues 456-476 (DPRSQQPPPPSHHLSKPKGDA) is disordered. Positions 479 to 484 (KMRASV) are mediates regulation of adenylate cyclase activity by C5 alpha-induced G- beta and gamma pathway. The segment at 493–501 (WGAARPFAH) is mediates regulation of adenylate cyclase activity by sphingosine 1-phosphate-induced G alpha 13 pathway. Residues 504-543 (HRESVSSSETPISNGRRQKAIPLRRHRAPDRSASPKGRLE) form a disordered region. Residues 508–518 (VSSSETPISNG) are compositionally biased toward polar residues. Positions 508 to 585 (VSSSETPISN…IFLEKGFERE (78 aa)) are modulates adenylate cyclase activity by modulating the binding of G(s)alpha to the high-affinity G(s)alpha binding site in 7C1a/7C2. The span at 519–531 (RRQKAIPLRRHRA) shows a compositional bias: basic residues. Transmembrane regions (helical) follow at residues 596–616 (YDFACASLVFVCILLVHLLVM), 621–641 (TLGVSFGLVACLLGLVLSFCF), and 670–689 (LVLVVLTVGSLLTVAIINMP). The N-linked (GlcNAc...) asparagine glycan is linked to asparagine 702. The next 3 helical transmembrane spans lie at 719-738 (LLPYYTCSCILGFIACSVFL), 747-766 (MLLTVALVAYLLLFNLSPCW), and 813-833 (DLKIMVNFYLILFYATLILLS). Topologically, residues 834-1099 (RQIDYYCRLD…TAKFQGLGLN (266 aa)) are cytoplasmic. ATP-binding positions include lysine 950, 1029–1031 (DIW), 1036–1040 (NVASR), and lysine 1076.

This sequence belongs to the adenylyl cyclase class-4/guanylyl cyclase family. It depends on Mg(2+) as a cofactor. Requires Mn(2+) as cofactor. Post-translationally, phosphorylated by PRKCD. Most abundant in heart, spleen and lung.

It is found in the membrane. The catalysed reaction is ATP = 3',5'-cyclic AMP + diphosphate. Its activity is regulated as follows. Activated by the G protein alpha subunit. Activated by the G protein beta and gamma subunit complex. Activated by GNA13 and GNA12. Ethanol and phorbol 12,13-dibutanoate significantly potentiate adenylate cyclase activity generated in response to the activation of the prostanoid receptor by the agonist prostaglandin E1(1-) in a PKC-dependent manner. Inhibited by lithium. Functionally, catalyzes the formation of cAMP in response to activation of G protein-coupled receptors. Functions in signaling cascades activated namely by thrombin and sphingosine 1-phosphate and mediates regulation of cAMP synthesis through synergistic action of the stimulatory G alpha protein with GNA13. Also, during inflammation, mediates zymosan-induced increase intracellular cAMP, leading to protein kinase A pathway activation in order to modulate innate immune responses through heterotrimeric G proteins G(12/13). Functions in signaling cascades activated namely by dopamine and C5 alpha chain and mediates regulation of cAMP synthesis through synergistic action of the stimulatory G protein with G beta:gamma complex. Functions, through cAMP response regulation, to keep inflammation under control during bacterial infection by sensing the presence of serum factors, such as the bioactive lysophospholipid (LPA) that regulate LPS-induced TNF-alpha production. However, it is also required for the optimal functions of B and T cells during adaptive immune responses by regulating cAMP synthesis in both B and T cells. The polypeptide is Adenylate cyclase type 7 (Mus musculus (Mouse)).